Reading from the N-terminus, the 220-residue chain is MNLYNLVRDALRPSYATVSPSVDEPTVDNNFVALSCYATLSVLLYYLQRVKQPYLSMLFHILFCLSQVCMVIWLIFSANFYVSLFAQCMLVVCALGCFLERTILSIKLRSMAPFMSMADNFAIIKTTCNNYVFPVERSSDNLVVLTTSRGIYSNGVFMKGAITVSDNALVVSLFKSHSLLLDRVEHGYDYTVFIYINSVILQNIKPTVSVVNTEFTDVEL.

The CoV 3a-like viroporin TM domain maps to 17–116; sequence TVSPSVDEPT…KLRSMAPFMS (100 aa). 3 helical membrane-spanning segments follow: residues 27 to 47, 56 to 76, and 80 to 100; these read VDNNFVALSCYATLSVLLYYL, SMLFHILFCLSQVCMVIWLIF, and FYVSLFAQCMLVVCALGCFLE. The CoV 3a-like viroporin CD domain occupies 120–200; sequence NFAIIKTTCN…TVFIYINSVI (81 aa).

It localises to the host membrane. In Bat coronavirus HKU9 (BtCoV), this protein is Non-structural protein 3.